Here is a 219-residue protein sequence, read N- to C-terminus: MRFQLFIYFYFTIVVIAGTNTIQQFSDAGDRLITSLRNLDNNGTYETLTAEKVPIIEGQIQNISAKYEQHTFILKGLEAVLNYKVKSLDNNERESLEIEYEKVEKALDAALNVSPFEYIKKFKEVSRGKVVNALENLSREQNRITINGGREDEKEKEAREKKKRLDRIKRILTVSLLELGLAQGVADLCAVAPFACLLGVTVGSIGFIFWLALIYNAIQ.

The N-terminal stretch at 1 to 19 is a signal peptide; the sequence is MRFQLFIYFYFTIVVIAGT. The Extracellular portion of the chain corresponds to 20-170; sequence NTIQQFSDAG…KKKRLDRIKR (151 aa). N-linked (GlcNAc...) asparagine glycosylation is found at Asn-42, Asn-62, and Asn-136. A helical transmembrane segment spans residues 171–191; it reads ILTVSLLELGLAQGVADLCAV. At 192 to 193 the chain is on the cytoplasmic side; it reads AP. The chain crosses the membrane as a helical span at residues 194-214; that stretch reads FACLLGVTVGSIGFIFWLALI. Residues 215-219 lie on the Extracellular side of the membrane; that stretch reads YNAIQ.

The protein belongs to the OSW4/6 family. In terms of processing, N-glycosylated.

The protein resides in the membrane. Functionally, involved in spore wall assembly. May be involved in maintaining genome integrity. The polypeptide is Outer spore wall protein 4 (Saccharomyces cerevisiae (strain ATCC 204508 / S288c) (Baker's yeast)).